The chain runs to 264 residues: Sirohydrochlorin cobaltochelatase (264 aa).

Co-sirohydrochlorin contacts are provided by Gly45, Ile84, Ile85, Asp88, Glu89, and Lys92. His145 serves as the catalytic Proton acceptor. 2 residues coordinate Co(2+): His145 and Glu175. 3 residues coordinate Co-sirohydrochlorin: Leu202, Val203, and His207. His207 lines the Co(2+) pocket.

This sequence belongs to the CbiK family. Homotrimer.

The catalysed reaction is Co-sirohydrochlorin + 2 H(+) = sirohydrochlorin + Co(2+). It catalyses the reaction Co-precorrin-2 + 3 H(+) = precorrin-2 + Co(2+). The protein operates within cofactor biosynthesis; adenosylcobalamin biosynthesis; cob(II)yrinate a,c-diamide from sirohydrochlorin (anaerobic route): step 1/10. In terms of biological role, cobalt chelatase responsible for the insertion of cobalt during anaerobic cobalamin biosynthesis. Can catalyze the insertion of Co(2+) into either sirohydrochlorin or precorrin-2. It is not clear which is the natural substrate in Salmonella. The sequence is that of Sirohydrochlorin cobaltochelatase from Salmonella typhimurium (strain LT2 / SGSC1412 / ATCC 700720).